The chain runs to 763 residues: Dual specificity tyrosine-phosphorylation-regulated kinase 1A (763 aa).

The residue at position 14 (Ser14) is a Phosphoserine. Residues 33-56 (QMPHSHQYSDRRQPNISDQQVSAL) are disordered. The span at 46–56 (PNISDQQVSAL) shows a compositional bias: polar residues. Position 111 is a phosphotyrosine; by autocatalysis (Tyr111). A disordered region spans residues 115-136 (KKRRHQQGQGDDSSHKKERKVY). A Bipartite nuclear localization signal motif is present at residues 117 to 134 (RRHQQGQGDDSSHKKERK). Tyr140 bears the Phosphotyrosine; by autocatalysis mark. Tyr145 carries the post-translational modification Phosphotyrosine. Residue Tyr159 is modified to Phosphotyrosine; by autocatalysis. The region spanning 159 to 479 (YEIDSLIGKG…PYYALQHSFF (321 aa)) is the Protein kinase domain. ATP is bound at residue 165–173 (IGKGSFGQV). At Tyr177 the chain carries Phosphotyrosine; by autocatalysis. Lys188 is an ATP binding site. The residue at position 219 (Tyr219) is a Phosphotyrosine; by autocatalysis. 238–241 (FEML) is an ATP binding site. The active-site Proton acceptor is the Asp287. The residue at position 310 (Ser310) is a Phosphoserine; by autocatalysis. 2 positions are modified to phosphotyrosine; by autocatalysis: Tyr319 and Tyr321. Thr402 is subject to Phosphothreonine; by autocatalysis. The tract at residues 408-442 (TKDGKREYKPPGTRKLHNILGVETGGPGGRRAGES) is disordered. Tyr449 is subject to Phosphotyrosine; by autocatalysis. Polar residues predominate over residues 485–501 (EGTNTSNSVSTSPAMEQ). 3 disordered regions span residues 485 to 540 (EGTN…HSGG), 596 to 679 (NALH…GNQA), and 744 to 763 (DREE…VASS). A compositionally biased stretch (low complexity) spans 502-525 (SQSSGTTSSTSSSSGGSSGTSNSG). Phosphoserine is present on residues Ser529 and Ser538. Residues 595–625 (QNALHHHHGNSSHHHHHHHHHHHHHGQQALG) are histidine-rich domain (HRD). Residues 598–620 (LHHHHGNSSHHHHHHHHHHHHHG) show a composition bias toward basic residues. Positions 634–645 (NSPTNSSSTQDS) are enriched in polar residues. The span at 654 to 672 (SMTSLSSSTTSSSTSSSST) shows a compositional bias: low complexity. Phosphoserine occurs at positions 748 and 758. Residues 754–763 (CVQQSPVASS) are compositionally biased toward polar residues.

Belongs to the protein kinase superfamily. CMGC Ser/Thr protein kinase family. MNB/DYRK subfamily. Interacts with RAD54L2/ARIP4. Interacts with CRY2. Interacts with RANBP9. Interacts with WDR68. Interacts with SIRT1. In terms of processing, can also autophosphorylate on serine and threonine residues (in vitro). Autophosphorylated on numerous tyrosine residues. As to expression, detected in brain (at protein level). Ubiquitous.

It is found in the nucleus speckle. It catalyses the reaction L-seryl-[protein] + ATP = O-phospho-L-seryl-[protein] + ADP + H(+). It carries out the reaction L-threonyl-[protein] + ATP = O-phospho-L-threonyl-[protein] + ADP + H(+). The catalysed reaction is L-tyrosyl-[protein] + ATP = O-phospho-L-tyrosyl-[protein] + ADP + H(+). The enzyme catalyses [DNA-directed RNA polymerase] + ATP = phospho-[DNA-directed RNA polymerase] + ADP + H(+). With respect to regulation, inhibited by RANBP9. Inhibited by harmine, leucettamine B and leucettine L41. Dual-specificity kinase which possesses both serine/threonine and tyrosine kinase activities. Exhibits a substrate preference for proline at position P+1 and arginine at position P-3. Plays an important role in double-strand breaks (DSBs) repair following DNA damage. Mechanistically, phosphorylates RNF169 and increases its ability to block accumulation of TP53BP1 at the DSB sites thereby promoting homologous recombination repair (HRR). Also acts as a positive regulator of transcription by acting as a CTD kinase that mediates phosphorylation of the CTD (C-terminal domain) of the large subunit of RNA polymerase II (RNAP II) POLR2A. May play a role in a signaling pathway regulating nuclear functions of cell proliferation. Modulates alternative splicing by phosphorylating the splice factor SRSF6. Has pro-survival function and negatively regulates the apoptotic process. Promotes cell survival upon genotoxic stress through phosphorylation of SIRT1. This in turn inhibits p53/TP53 activity and apoptosis. Phosphorylates SEPTIN4, SEPTIN5 and SF3B1 at 'Thr-434'. The chain is Dual specificity tyrosine-phosphorylation-regulated kinase 1A (Dyrk1a) from Rattus norvegicus (Rat).